Reading from the N-terminus, the 360-residue chain is GDSL esterase/lipase At1g06990 (360 aa).

A signal peptide spans 1 to 22 (MLIHVIIFMIITTMQFSTTCHA). N-linked (GlcNAc...) asparagine glycosylation is found at Asn26 and Asn31. Catalysis depends on Ser44, which acts as the Nucleophile. N-linked (GlcNAc...) asparagine glycosylation is found at Asn73, Asn126, and Asn272. Residues Asp335 and His338 contribute to the active site.

This sequence belongs to the 'GDSL' lipolytic enzyme family.

The protein localises to the secreted. This Arabidopsis thaliana (Mouse-ear cress) protein is GDSL esterase/lipase At1g06990.